Consider the following 100-residue polypeptide: Urease subunit gamma (100 aa).

This sequence belongs to the urease gamma subunit family. Heterotrimer of UreA (gamma), UreB (beta) and UreC (alpha) subunits. Three heterotrimers associate to form the active enzyme.

The protein localises to the cytoplasm. It carries out the reaction urea + 2 H2O + H(+) = hydrogencarbonate + 2 NH4(+). It functions in the pathway nitrogen metabolism; urea degradation; CO(2) and NH(3) from urea (urease route): step 1/1. The sequence is that of Urease subunit gamma from Prochlorococcus marinus (strain MIT 9303).